The following is a 543-amino-acid chain: Sarafotoxin (543 aa).

Residues 1 to 23 form the signal peptide; that stretch reads MALLPRLAAGGLLLLLALAALEG. A propeptide spanning residues 24–69 is cleaved from the precursor; the sequence is KPAPSALSQLLEKRSEDQAAAGRIIDGGDTKQAARDPSPQRNVEPL. Residues 45-65 are disordered; it reads GRIIDGGDTKQAARDPSPQRN. 12 consecutive repeat copies span residues 51–90, 91–130, 131–170, 171–210, 211–250, 251–290, 291–330, 331–370, 371–410, 411–450, 451–490, and 491–530. The interval 51–530 is 12 X 40 AA tandem repeats; it reads GDTKQAARDP…LNFCHQDVIW (480 aa). 2 disulfide bridges follow: Cys70–Cys84 and Cys72–Cys80. Residues 92–109 constitute a propeptide that is removed on maturation; that stretch reads DTKQAARDPSPQRNVEPL. 2 disulfides stabilise this stretch: Cys110-Cys124 and Cys112-Cys120. A propeptide spanning residues 132–149 is cleaved from the precursor; that stretch reads DTKQAARDPSPQRNVEPL. 2 disulfides stabilise this stretch: Cys150–Cys164 and Cys152–Cys160. Residues 172–189 constitute a propeptide that is removed on maturation; the sequence is DTKQAARDPSPQRNVEPL. 2 cysteine pairs are disulfide-bonded: Cys190/Cys204 and Cys192/Cys200. Positions 212-229 are excised as a propeptide; it reads DTKQAARDPSPQRNVEPL. Cystine bridges form between Cys230–Cys244 and Cys232–Cys240. Residues 252 to 269 constitute a propeptide that is removed on maturation; sequence DTKQAARDPSPQRNVEPL. 2 cysteine pairs are disulfide-bonded: Cys270/Cys284 and Cys272/Cys280. The propeptide occupies 292–309; it reads DTKQAARDPSPQRNVEPL. 2 disulfides stabilise this stretch: Cys310/Cys324 and Cys312/Cys320. Positions 332–349 are excised as a propeptide; the sequence is DTKQAARDPSPQRNVEPL. 2 disulfides stabilise this stretch: Cys350/Cys364 and Cys352/Cys360. The propeptide occupies 372–389; it reads DTKQAARDPSPQRNVEPL. Intrachain disulfides connect Cys390-Cys404 and Cys392-Cys400. Positions 412-429 are excised as a propeptide; it reads DTKQAARDPSPQRNVEPL. Intrachain disulfides connect Cys430/Cys444 and Cys432/Cys440. Residues 452–469 constitute a propeptide that is removed on maturation; the sequence is DTKQAARDPSPQRNVEPL. 2 cysteine pairs are disulfide-bonded: Cys470–Cys484 and Cys472–Cys480. The propeptide occupies 492–509; the sequence is DTKQAARDPSPQRNVEPL. 2 cysteine pairs are disulfide-bonded: Cys510–Cys524 and Cys512–Cys520. A propeptide spanning residues 532–543 is cleaved from the precursor; the sequence is NADTSANPEFLG.

Belongs to the endothelin/sarafotoxin family. Expressed by the venom gland.

The protein localises to the secreted. Vasoconstrictor activity. These toxins cause cardiac arrest probably as a result of coronary vasospasm. Functionally, vasoconstrictor activity. Causes cardiac arrest probably as a result of coronary vasospasm. Displays high agonistic activities towards endothelin-2 receptor (EDNRB) (displays affinity in the picomolar range) and endothelin-1 receptor (EDNRA) (lower affinities). The polypeptide is Sarafotoxin (Atractaspis engaddensis (Israeli burrowing asp)).